A 317-amino-acid chain; its full sequence is Glycine--tRNA ligase alpha subunit (317 aa).

It belongs to the class-II aminoacyl-tRNA synthetase family. Tetramer of two alpha and two beta subunits.

It localises to the cytoplasm. It catalyses the reaction tRNA(Gly) + glycine + ATP = glycyl-tRNA(Gly) + AMP + diphosphate. This chain is Glycine--tRNA ligase alpha subunit, found in Leptothrix cholodnii (strain ATCC 51168 / LMG 8142 / SP-6) (Leptothrix discophora (strain SP-6)).